The chain runs to 104 residues: MSHTILLVQPTKRPEGRTYADYESVNECMEGVCKMYEEHLKRMNPNSPSITYDISQLFDFIDDLADLSCLVYRADTQTYQPYNKDWIKEKIYVLLRRQAQQAGK.

Position 2 is an N-acetylserine (serine 2). The residue at position 11 (threonine 11) is a Phosphothreonine. Lysine 12 is covalently cross-linked (Glycyl lysine isopeptide (Lys-Gly) (interchain with G-Cter in SUMO2)).

It belongs to the E(R) family. In terms of assembly, homodimer.

Its subcellular location is the nucleus. May have a role in the cell cycle. This Bos taurus (Bovine) protein is Enhancer of rudimentary homolog (ERH).